Consider the following 277-residue polypeptide: Indole-3-glycerol phosphate synthase (277 aa).

The protein belongs to the TrpC family.

It carries out the reaction 1-(2-carboxyphenylamino)-1-deoxy-D-ribulose 5-phosphate + H(+) = (1S,2R)-1-C-(indol-3-yl)glycerol 3-phosphate + CO2 + H2O. Its pathway is amino-acid biosynthesis; L-tryptophan biosynthesis; L-tryptophan from chorismate: step 4/5. The protein is Indole-3-glycerol phosphate synthase of Pseudomonas putida (strain ATCC 47054 / DSM 6125 / CFBP 8728 / NCIMB 11950 / KT2440).